A 1525-amino-acid chain; its full sequence is Multidrug resistance-associated protein 1 (1525 aa).

The Extracellular portion of the chain corresponds to 1 to 33 (MGIESLCSADASEPFWDWNLTWHTENPDFTQCF). A helical transmembrane segment spans residues 34 to 54 (QNTVLVWVPCIYLWVCFPAYF). Residues 55-74 (LYLRSHDRGYIQMSILNKAK) lie on the Cytoplasmic side of the membrane. Residues 75–95 (TALGLILWIVCWADLFYSFWE) traverse the membrane as a helical segment. Residues 96–100 (RSQNI) are Extracellular-facing. The chain crosses the membrane as a helical span at residues 101-121 (FRAPFFLISPTVLGITMLLAT). The Cytoplasmic portion of the chain corresponds to 122-133 (FLIQHERLKGVQ). The chain crosses the membrane as a helical span at residues 134 to 154 (SSGVMMIFWLISLLCATVIFR). Topologically, residues 155-172 (SKIMLALNTDTEVDAFRY) are extracellular. The helical transmembrane segment at 173–193 (VTFCTYFILLLVQLILSCFPE) threads the bilayer. Residues 194–315 (KPPLFSEAVN…RSSEASLSKV (122 aa)) lie on the Cytoplasmic side of the membrane. Residues 316 to 336 (LYKTFGPYFLMSFLFKAAHDL) form a helical membrane-spanning segment. An ABC transmembrane type-1 1 domain is found at 324–607 (FLMSFLFKAA…LPMVISSIVE (284 aa)). Residues 337 to 362 (LMFTGPEILKLLINFVNNKSAPNWQG) are Extracellular-facing. Residues 363-383 (YFYTGLLFVCACLQTLILHQY) traverse the membrane as a helical segment. Topologically, residues 384-439 (FHICFVTGMRLKTAIVGVIYRKALVITNSARKTSTVGEIVNLMSVDAQRFMDLATY) are cytoplasmic. Residues 440–460 (INMIWSAPLQVILALYLLWRN) traverse the membrane as a helical segment. Topologically, residues 461-463 (LGP) are extracellular. A helical transmembrane segment spans residues 464–484 (SVLAGVAVMILLVPINAVMAM). At 485-546 (KTKTYQVAQM…VLKKSAYLAA (62 aa)) the chain is on the cytoplasmic side. The helical transmembrane segment at 547-567 (MGTFTWVCAPFLVALSTFAVY) threads the bilayer. Residues 568-589 (VKVNKNNILDAQKAFVSLALFN) lie on the Extracellular side of the membrane. Residues 590–610 (ILRFPLNILPMVISSIVEASV) form a helical membrane-spanning segment. The Cytoplasmic segment spans residues 611 to 961 (SLKRLRVFLS…VKATVYWEYM (351 aa)). One can recognise an ABC transporter 1 domain in the interval 641–865 (IVVKNATFSW…DGAFAEFLRT (225 aa)). 675–682 (GQVGCGKS) contributes to the ATP binding site. Polar residues-rich tracts occupy residues 871–882 (QSMESSDASSPS) and 908–928 (SNSSTYSRETGKSQHQSSTAE). Disordered regions lie at residues 871–891 (QSMESSDASSPSGKEGKPVEN) and 908–930 (SNSSTYSRETGKSQHQSSTAELQ). Residues 962–982 (KAIGLYISFLSVFLFMCNHIA) form a helical membrane-spanning segment. The 282-residue stretch at 969–1250 (SFLSVFLFMC…LVRMTSDLET (282 aa)) folds into the ABC transmembrane type-1 2 domain. Residues 983 to 1019 (SLASNYWLSLWTDDPVVNGTQQYTNVRLGVYGALGIS) are Extracellular-facing. The chain crosses the membrane as a helical span at residues 1020 to 1040 (QGIAVFGYSMAVSIGGIFASR). Residues 1041–1083 (HLHLDLLHNVLRSPMSFFERTPSGNLVSRFSKEIDTIDSTIPP) lie on the Cytoplasmic side of the membrane. Residues 1084–1104 (IIKMFMGSTFNVIGACIIILL) form a helical membrane-spanning segment. Position 1105 (Ala-1105) is a topological domain, extracellular. A helical transmembrane segment spans residues 1106-1126 (TPIAAVVIPPLGLVYLLVQRF). Residues 1127–1197 (YVATSRQLKR…VANRWLAVRL (71 aa)) are Cytoplasmic-facing. A helical membrane pass occupies residues 1198–1218 (EFVGNCIVLFAALFAVIARNK). Topologically, residues 1219-1220 (LS) are extracellular. Residues 1221 to 1241 (PGLIGLSVSYSLQITAYLNWL) form a helical membrane-spanning segment. The Cytoplasmic segment spans residues 1242–1525 (VRMTSDLETN…YSMAKDSGLA (284 aa)). One can recognise an ABC transporter 2 domain in the interval 1289-1521 (FRGFGLRYRE…KGLFYSMAKD (233 aa)). 1321 to 1328 (GRTGAGKS) lines the ATP pocket.

It belongs to the ABC transporter superfamily. ABCC family. Conjugate transporter (TC 3.A.1.208) subfamily.

It is found in the cell membrane. It carries out the reaction ATP + H2O + xenobioticSide 1 = ADP + phosphate + xenobioticSide 2.. The catalysed reaction is an S-substituted glutathione(in) + ATP + H2O = an S-substituted glutathione(out) + ADP + phosphate + H(+). The enzyme catalyses sphing-4-enine 1-phosphate(in) + ATP + H2O = sphing-4-enine 1-phosphate(out) + ADP + phosphate + H(+). It catalyses the reaction leukotriene C4(in) + ATP + H2O = leukotriene C4(out) + ADP + phosphate + H(+). It carries out the reaction 17beta-estradiol 17-O-(beta-D-glucuronate)(in) + ATP + H2O = 17beta-estradiol 17-O-(beta-D-glucuronate)(out) + ADP + phosphate + H(+). The catalysed reaction is 2',3'-cGAMP(in) + ATP + H2O = 2',3'-cGAMP(out) + ADP + phosphate + H(+). In terms of biological role, mediates export of organic anions and drugs from the cytoplasm. Mediates ATP-dependent transport of glutathione and glutathione conjugates, leukotriene C4, estradiol-17-beta-o-glucuronide and other xenobiotics. Hydrolyzes ATP with low efficiency. Mediates ATP-dependent, GSH-independent cyclic GMP-AMP (cGAMP) export. Thus, by limiting intracellular cGAMP concentrations negatively regulates the cGAS-STING pathway. This Gallus gallus (Chicken) protein is Multidrug resistance-associated protein 1.